We begin with the raw amino-acid sequence, 213 residues long: Glycerol-3-phosphate acyltransferase (213 aa).

The next 6 helical transmembrane spans lie at 4–24 (IILL…LWIG), 48–68 (ILGV…GTLA), 71–91 (LPLF…LAVI), 113–133 (VILG…IIVL), 144–164 (VIGA…GFIL), and 165–185 (TSYD…IILR).

The protein belongs to the PlsY family. In terms of assembly, probably interacts with PlsX.

Its subcellular location is the cell membrane. The catalysed reaction is an acyl phosphate + sn-glycerol 3-phosphate = a 1-acyl-sn-glycero-3-phosphate + phosphate. Its pathway is lipid metabolism; phospholipid metabolism. Its function is as follows. Catalyzes the transfer of an acyl group from acyl-phosphate (acyl-PO(4)) to glycerol-3-phosphate (G3P) to form lysophosphatidic acid (LPA). This enzyme utilizes acyl-phosphate as fatty acyl donor, but not acyl-CoA or acyl-ACP. The protein is Glycerol-3-phosphate acyltransferase of Lactococcus lactis subsp. lactis (strain IL1403) (Streptococcus lactis).